The primary structure comprises 395 residues: Protein pelota (395 aa).

Positions 210 to 212 match the PGF motif motif; sequence PGF. Positions 371–395 are disordered; it reads PELEDSDDDDDEDGAAGGVADSDSD. The segment covering 372-384 has biased composition (acidic residues); that stretch reads ELEDSDDDDDEDG.

Belongs to the eukaryotic release factor 1 family. Pelota subfamily. In terms of assembly, component of the Pelota-HBS1L complex, also named Dom34-Hbs1 complex, composed of pelo and HBS1. Interacts with Pink1 and Cnot4; the interaction with Cnot4 appears to be Pink1-dependent. Requires a divalent metal cation as cofactor. In terms of tissue distribution, expressed in ovaries and muscles (at protein level). Expressed throughout all development stages.

The protein resides in the nucleus. The protein localises to the cytoplasm. Functionally, component of the Pelota-HBS1L complex, a complex that recognizes stalled ribosomes and triggers the No-Go Decay (NGD) pathway. In the Pelota-HBS1L complex, pelo recognizes ribosomes stalled at the 3' end of an mRNA and engages stalled ribosomes by destabilizing mRNA in the mRNA channel. Following ribosome-binding, the Pelota-HBS1L complex promotes recruitment of pix, which drives the disassembly of stalled ribosomes, followed by degradation of damaged mRNAs as part of the NGD pathway. Required prior to the first meiotic division for spindle formation and nuclear envelope breakdown during spermatogenesis. Together with HBS1, promotes spermatid individualization during spermatogenesis. Required for ovarian germ line stem cell self-renewal and oocyte development during oogenesis. Together with HSB1, required for transposon silencing in the ovary and testis. As part of the Pink1-regulated signaling, is recruited to damaged mitochondrial and is required for recruitment of autophagy receptors and induction of mitophagy. Required for normal eye patterning and for mitotic divisions in the ovary. The chain is Protein pelota (pelo) from Drosophila melanogaster (Fruit fly).